Consider the following 523-residue polypeptide: Transcription initiation factor TFIID subunit 4 (523 aa).

Disordered regions lie at residues 1 to 100 and 185 to 241; these read MSLP…AASD and ASVE…VQGG. Low complexity predominate over residues 58–77; the sequence is QMQPPRQPIQQQMQHFQSPS. The segment covering 78–87 has biased composition (pro residues); it reads PMAPQGPPGT. One can recognise a TAFH domain in the interval 101 to 199; the sequence is DKNVTKCVRF…VNPPPGYVFN (99 aa). A compositionally biased stretch (pro residues) spans 204-213; sequence PGPPQPPPPQ. A compositionally biased stretch (low complexity) spans 214–236; it reads QQSQQQPPLEMRQIPNPNQIPPQ. Residues 329–383 form a histone-fold region; sequence LKPDEVLNRITKRMMSSCSVEEEALVAISDAVESHLRELITLMAGVAEHRVESLR. The segment at 333–382 is necessary and sufficient for interaction with oma-1; that stretch reads EVLNRITKRMMSSCSVEEEALVAISDAVESHLRELITLMAGVAEHRVESL. Residues 407 to 435 are disordered; the sequence is QEEELRESREKESLIRMSKNKNSGKETIE.

The protein belongs to the TAF4 family. In terms of assembly, component of the TFIID basal transcription factor complex, composed of TATA-box-binding protein tbp-1, and a number of TBP-associated factors (TAFs). Interacts (via histone-fold domain) with oma-1 (via histone-fold domain). May also interact with oma-2. Interacts (via histone-fold domain) with taf-12 (via the histone-fold domain).

The protein resides in the nucleus. It is found in the cytoplasm. The TFIID basal transcription factor complex plays a major role in the initiation of RNA polymerase II (Pol II)-dependent transcription. TFIID recognizes and binds promoters via its subunit tbp-1, a TATA-box-binding protein, and promotes assembly of the pre-initiation complex (PIC). The TFIID complex consists of tbp-1 and TBP-associated factors (TAFs), including taf-4. Essential for early embryonic development, probably acting via activating transcription initiation by RNA polymerase II, as part of the TFIID complex. In early embryos, but not oocytes, remains, presumably inactive, in the cytoplasm as a result of binding to oma-1. Upon degradation of oma-1, taf-4 is released and bound by taf-12, and the taf-4/12 heterodimer translocates to the nucleus and transcriptional repression is relieved. Involved in lifespan extension in a manner dependent upon mitochondrial function. Plays a role in modulating polyribosome formation. The protein is Transcription initiation factor TFIID subunit 4 of Caenorhabditis elegans.